Here is a 127-residue protein sequence, read N- to C-terminus: Protein ApaG (127 aa).

The ApaG domain maps to 3 to 127 (KDKRYAFSVK…FQLNMPRVLH (125 aa)).

The polypeptide is Protein ApaG (Methylobacillus flagellatus (strain ATCC 51484 / DSM 6875 / VKM B-1610 / KT)).